The chain runs to 417 residues: Gap junction alpha-3 protein (417 aa).

Residues 2-15 lie within the membrane without spanning it; the sequence is GDWSFLGRLLENAQ. The Cytoplasmic segment spans residues 16-19; it reads EHST. Residues 20-40 traverse the membrane as a helical segment; sequence VIGKVWLTVLFIFRILVLGAA. Residues 41–71 lie on the Extracellular side of the membrane; that stretch reads AEEVWGDEQSDFTCNTQQPGCENVCYDRAFP. Disulfide bonds link Cys54–Cys198, Cys61–Cys192, and Cys65–Cys187. Residues 72 to 92 form a helical membrane-spanning segment; sequence ISHIRFWALQIIFVSTPTLIY. Residues 93-158 are Cytoplasmic-facing; sequence LGHVLHIVRM…GALLRTYVFN (66 aa). Positions 110-128 are enriched in basic and acidic residues; it reads EEELLRRDNPQHGRGREPM. Residues 110–141 are disordered; it reads EEELLRRDNPQHGRGREPMRTGSPRDPPLRDD. The helical transmembrane segment at 159-179 threads the bilayer; the sequence is IIFKTLFEVGFIAGQYFLYGF. Topologically, residues 180-207 are extracellular; sequence QLQPLYRCDRWPCPNTVDCFISRPTEKT. Residues 208–228 form a helical membrane-spanning segment; sequence IFVIFMLAVACASLVLNMLEI. Over 229–417 the chain is Cytoplasmic; the sequence is YHLGWKKLKQ…GRARPGDLAI (189 aa). Disordered regions lie at residues 247–267 and 334–417; these read DASE…SSGP and RQVA…DLAI. Over residues 342 to 353 the composition is skewed to low complexity; sequence PASKPSSAASSP.

Belongs to the connexin family. Alpha-type (group II) subfamily. In terms of assembly, a hemichannel or connexon is composed of a hexamer of connexins. A functional gap junction is formed by the apposition of two hemichannels. Forms heteromeric channels with GJA8.

It localises to the cell membrane. It is found in the cell junction. The protein localises to the gap junction. In terms of biological role, structural component of lens fiber gap junctions. Gap junctions are dodecameric channels that connect the cytoplasm of adjoining cells. They are formed by the docking of two hexameric hemichannels, one from each cell membrane. Small molecules and ions diffuse from one cell to a neighboring cell via the central pore. The polypeptide is Gap junction alpha-3 protein (Gja3) (Mus musculus (Mouse)).